Consider the following 330-residue polypeptide: MINLRRFVHTSCRLERGRTAFYNVHQKVTDPAKQDPDYFEKKARELPLDQNYIDALTKLYYEKIGSERDLGLKAADNLILEKTEFGLPRIEKSKTRAKYEDLDVLSNAPESVKKIFSVEMATRKELSQEWKQSLIKSVRQHSLDENSLEMKIAWLTALIRHWSLLVNDIGQETKKKPTWLTHRIWLVINERRKALRILRERNETAFEKTIAALKISYHVPKQPAHVKTRKAWAEAQLKLRVENEKEKRLEELHEKYDKEVEEHKRETQEKRKALNNELDKLAQEMRQIDVIEGKSFETVGKYEPALISSLTETVIHSNLFYHPPPTMTEK.

The protein belongs to the universal ribosomal protein uS15 family. In terms of assembly, component of the mitochondrial ribosome small subunit (28S) which comprises a 12S rRNA and about 30 distinct proteins.

It is found in the mitochondrion. The protein is Small ribosomal subunit protein uS15m (mrps-15) of Caenorhabditis elegans.